A 499-amino-acid chain; its full sequence is Interleukin-17 receptor B (499 aa).

The first 17 residues, Met1 to Pro17, serve as a signal peptide directing secretion. Over Arg18–Gly286 the chain is Extracellular. 4 N-linked (GlcNAc...) asparagine glycosylation sites follow: Asn67, Asn103, Asn156, and Asn197. A helical membrane pass occupies residues Trp287–Leu307. Over Thr308–Leu499 the chain is Cytoplasmic. In terms of domain architecture, SEFIR spans Leu328–Thr474.

As to quaternary structure, interacts with DAZAP2. Interacts with TRAF3IP2. As to expression, liver and testis. Expressed at lower level in kidney and lung. Expressed in selected T-cell, B-cell and myeloid cell lines.

The protein localises to the cell membrane. It is found in the secreted. In terms of biological role, receptor for the pro-inflammatory cytokines IL17B and IL17E. May play a role in controlling the growth and/or differentiation of hematopoietic cells. This chain is Interleukin-17 receptor B (Il17rb), found in Mus musculus (Mouse).